Consider the following 452-residue polypeptide: UDP-N-acetylmuramate--L-alanine ligase (452 aa).

110–116 (GTHGKTT) is a binding site for ATP.

It belongs to the MurCDEF family.

It is found in the cytoplasm. It catalyses the reaction UDP-N-acetyl-alpha-D-muramate + L-alanine + ATP = UDP-N-acetyl-alpha-D-muramoyl-L-alanine + ADP + phosphate + H(+). It participates in cell wall biogenesis; peptidoglycan biosynthesis. Cell wall formation. The polypeptide is UDP-N-acetylmuramate--L-alanine ligase (Francisella philomiragia subsp. philomiragia (strain ATCC 25017 / CCUG 19701 / FSC 153 / O#319-036)).